The sequence spans 131 residues: D-ribose pyranase (131 aa).

Residue histidine 20 is the Proton donor of the active site. Substrate-binding positions include aspartate 28, histidine 98, and 120-122 (YAN).

This sequence belongs to the RbsD / FucU family. RbsD subfamily. In terms of assembly, homodecamer.

It localises to the cytoplasm. It carries out the reaction beta-D-ribopyranose = beta-D-ribofuranose. Its pathway is carbohydrate metabolism; D-ribose degradation; D-ribose 5-phosphate from beta-D-ribopyranose: step 1/2. In terms of biological role, catalyzes the interconversion of beta-pyran and beta-furan forms of D-ribose. The protein is D-ribose pyranase of Laribacter hongkongensis (strain HLHK9).